We begin with the raw amino-acid sequence, 155 residues long: uncharacterized protein (155 aa).

This is an uncharacterized protein from Methanocaldococcus jannaschii (strain ATCC 43067 / DSM 2661 / JAL-1 / JCM 10045 / NBRC 100440) (Methanococcus jannaschii).